A 343-amino-acid chain; its full sequence is Glyceraldehyde-3-phosphate dehydrogenase (343 aa).

Residues 13–14 and Gly112 contribute to the NAD(+) site; that span reads TI. Residue 141–143 coordinates D-glyceraldehyde 3-phosphate; the sequence is SCN. Residue Cys142 is the Nucleophile of the active site. Arg170 lines the NAD(+) pocket. 196 to 197 serves as a coordination point for D-glyceraldehyde 3-phosphate; that stretch reads HA. Gln303 lines the NAD(+) pocket.

It belongs to the glyceraldehyde-3-phosphate dehydrogenase family. As to quaternary structure, homotetramer.

The protein resides in the cytoplasm. It carries out the reaction D-glyceraldehyde 3-phosphate + phosphate + NADP(+) = (2R)-3-phospho-glyceroyl phosphate + NADPH + H(+). The catalysed reaction is D-glyceraldehyde 3-phosphate + phosphate + NAD(+) = (2R)-3-phospho-glyceroyl phosphate + NADH + H(+). Its pathway is carbohydrate degradation; glycolysis; pyruvate from D-glyceraldehyde 3-phosphate: step 1/5. The chain is Glyceraldehyde-3-phosphate dehydrogenase (gap) from Aeropyrum pernix (strain ATCC 700893 / DSM 11879 / JCM 9820 / NBRC 100138 / K1).